A 234-amino-acid polypeptide reads, in one-letter code: Uridylate kinase (234 aa).

Position 10–11 (10–11) interacts with ATP; it reads GS. UMP is bound at residue Gly44. Gly45 and Arg49 together coordinate ATP. UMP-binding positions include Asp66 and 114–120; that span reads ITPAQTT. Residues Thr140, Tyr146, and Asp149 each contribute to the ATP site.

This sequence belongs to the UMP kinase family. In terms of assembly, homohexamer.

The protein resides in the cytoplasm. The enzyme catalyses UMP + ATP = UDP + ADP. It functions in the pathway pyrimidine metabolism; CTP biosynthesis via de novo pathway; UDP from UMP (UMPK route): step 1/1. With respect to regulation, inhibited by UTP. Its function is as follows. Catalyzes the reversible phosphorylation of UMP to UDP. The protein is Uridylate kinase of Methanoculleus marisnigri (strain ATCC 35101 / DSM 1498 / JR1).